The following is a 180-amino-acid chain: Large ribosomal subunit protein uL5 (180 aa).

This sequence belongs to the universal ribosomal protein uL5 family. In terms of assembly, part of the 50S ribosomal subunit; part of the 5S rRNA/L5/L18/L25 subcomplex. Contacts the 5S rRNA and the P site tRNA. Forms a bridge to the 30S subunit in the 70S ribosome.

In terms of biological role, this is one of the proteins that bind and probably mediate the attachment of the 5S RNA into the large ribosomal subunit, where it forms part of the central protuberance. In the 70S ribosome it contacts protein S13 of the 30S subunit (bridge B1b), connecting the 2 subunits; this bridge is implicated in subunit movement. Contacts the P site tRNA; the 5S rRNA and some of its associated proteins might help stabilize positioning of ribosome-bound tRNAs. In Ralstonia pickettii (strain 12J), this protein is Large ribosomal subunit protein uL5.